The chain runs to 427 residues: Glutamate-1-semialdehyde 2,1-aminomutase (427 aa).

K265 is modified (N6-(pyridoxal phosphate)lysine).

Belongs to the class-III pyridoxal-phosphate-dependent aminotransferase family. HemL subfamily. In terms of assembly, homodimer. It depends on pyridoxal 5'-phosphate as a cofactor.

Its subcellular location is the cytoplasm. The catalysed reaction is (S)-4-amino-5-oxopentanoate = 5-aminolevulinate. The protein operates within porphyrin-containing compound metabolism; protoporphyrin-IX biosynthesis; 5-aminolevulinate from L-glutamyl-tRNA(Glu): step 2/2. This Paraburkholderia phytofirmans (strain DSM 17436 / LMG 22146 / PsJN) (Burkholderia phytofirmans) protein is Glutamate-1-semialdehyde 2,1-aminomutase.